The sequence spans 644 residues: Zinc transporter ZIP4 (644 aa).

The first 27 residues, 1–27 (MAILAWLEPRPLLAVLVLVLTMRMAQP), serve as a signal peptide directing secretion. The Extracellular portion of the chain corresponds to 28–323 (AHLLTLLSSG…QNQLSQAEKY (296 aa)). Intrachain disulfides connect Cys59/Cys64, Cys67/Cys103, and Cys153/Cys188. Positions 231-259 (TETHSDHHHQEKRVNRQGPTPLTAPNSSS) are disordered. The segment covering 233-244 (THSDHHHQEKRV) has biased composition (basic and acidic residues). Over residues 247-259 (QGPTPLTAPNSSS) the composition is skewed to polar residues. A disulfide bridge connects residues Cys266 and Cys305. A helical membrane pass occupies residues 324–344 (LYGSLATLLICLCSTFGLLLL). Residues 345–355 (TCAACSTAAHY) are Cytoplasmic-facing. The helical transmembrane segment at 356–376 (VIQTFLGMAVGALTGDALLHL) threads the bilayer. The Extracellular segment spans residues 377-404 (TPKVLGLHQHGGDSEHRADSHGPQTTWR). The helical transmembrane segment at 405–425 (LVVALSGLYVFFLFEKLCDLL) threads the bilayer. At 426–495 (LPQDPEDRKG…KSPELRLLPY (70 aa)) the chain is on the cytoplasmic side. The Essential for SLC39A4 endocytosis motif lies at 449 to 451 (LQL). Residues 456–467 (LRPPKQPHEGSR) are compositionally biased toward basic and acidic residues. The interval 456–484 (LRPPKQPHEGSRADLVAEESPELLSPEPR) is disordered. Residues 496–515 (MITLGDGLHNFADGLAVGAA) traverse the membrane as a helical segment. Residues His504, Asn505, and Asp508 each contribute to the Zn(2+) site. Residues 516–523 (FASSWKTG) are Extracellular-facing. A helical transmembrane segment spans residues 524–550 (LATSLAVFCHEVPHELGDFAALLHAGL). Zn(2+)-binding residues include His533, Glu534, and His537. The Cytoplasmic portion of the chain corresponds to 551–555 (PVSRA). A helical membrane pass occupies residues 556 to 576 (LLLNLASGLTAFAGLYVALAL). Residues 577–583 (GVGEESE) lie on the Extracellular side of the membrane. A helical membrane pass occupies residues 584–604 (SWTLAVAIGLFLYVALCDMLP). The Cytoplasmic portion of the chain corresponds to 605–614 (AMLNVRDPRP). Residues 615–635 (WLLFLLHNVGLLGGWAVLLLL) traverse the membrane as a helical segment. The Extracellular portion of the chain corresponds to 636–644 (SLYEDSIAL).

It belongs to the ZIP transporter (TC 2.A.5) family. Homodimer. In terms of processing, the extracellular N-terminal ectodomain is cleaved when cells are Zn(2+) deficient, N-terminally cleaved SLC39A4 is internalized at a faster rate. Under excess Zn(2+) conditions, SLC39A4 on the cell surface is rapidly endocytosed, ubiquitinated and degraded. Post-translationally, glycosylated.

It localises to the cell membrane. The protein localises to the recycling endosome membrane. The protein resides in the apical cell membrane. It catalyses the reaction Zn(2+)(in) = Zn(2+)(out). Selective transporter that mediates the uptake of Zn(2+). Plays an essential role for dietary zinc uptake from small intestine. The Zn(2+) uniporter activity is regulated by zinc availability. Also exhibits polyspecific binding and transport of Cu(2+), Cd(2+) and possibly Ni(2+) but at higher concentrations. The chain is Zinc transporter ZIP4 from Pteropus alecto (Black flying fox).